A 515-amino-acid chain; its full sequence is Maturase K (515 aa).

The protein belongs to the intron maturase 2 family. MatK subfamily.

It is found in the plastid. Its subcellular location is the chloroplast. Usually encoded in the trnK tRNA gene intron. Probably assists in splicing its own and other chloroplast group II introns. This is Maturase K from Cedrus atlantica (Atlas cedar).